Here is a 491-residue protein sequence, read N- to C-terminus: (S)-canadine synthase (491 aa).

A helical transmembrane segment spans residues Leu6–Phe26. Cys434 is a binding site for heme.

The protein belongs to the cytochrome P450 family. Heme is required as a cofactor. As to expression, expressed at low levels in roots.

Its subcellular location is the endoplasmic reticulum membrane. The protein localises to the microsome membrane. The catalysed reaction is (S)-tetrahydrocolumbamine + reduced [NADPH--hemoprotein reductase] + O2 = (S)-canadine + oxidized [NADPH--hemoprotein reductase] + 2 H2O + H(+). Functionally, involved in the last but one step of the biosynthesis of berberine, an antimicrobial benzylisoquinoline alkaloid. Converts (S)-tetrahydrocolumbamine (THC) to (S)-tetrahydroberberine (THB) also called (S)-canadine. The polypeptide is (S)-canadine synthase (CYP719A1) (Coptis japonica (Japanese goldthread)).